The sequence spans 149 residues: Large ribosomal subunit protein uL13 (149 aa).

Belongs to the universal ribosomal protein uL13 family. Part of the 50S ribosomal subunit.

Functionally, this protein is one of the early assembly proteins of the 50S ribosomal subunit, although it is not seen to bind rRNA by itself. It is important during the early stages of 50S assembly. This is Large ribosomal subunit protein uL13 from Chlamydia pneumoniae (Chlamydophila pneumoniae).